The primary structure comprises 362 residues: Malate dehydrogenase (362 aa).

This sequence belongs to the LDH2/MDH2 oxidoreductase family. As to quaternary structure, homodimer.

It localises to the cytoplasm. It carries out the reaction (S)-malate + NAD(+) = oxaloacetate + NADH + H(+). This is Malate dehydrogenase (mdh) from Pyrococcus abyssi (strain GE5 / Orsay).